We begin with the raw amino-acid sequence, 253 residues long: Giant extracellular hemoglobin linker 1 chain (253 aa).

The region spanning 89–131 (HHCDDDHLSCKDVAFTCIGHNLVCDGHKDCLNGHDEDEETCSI) is the LDL-receptor class A domain. 3 disulfides stabilise this stretch: Cys91–Cys105, Cys98–Cys118, and Cys112–Cys129.

As to quaternary structure, disulfide-linked dimer of identical chains. A model is proposed for the subunit structure of the Tylorrhynchus hemoglobin, consisting of 216 polypeptide chains, 192 heme-containing chains, and 24 linker chains.

Its function is as follows. Acts as a linker for the assembly of heme-containing chains in the construction of giant hemoglobin. The polypeptide is Giant extracellular hemoglobin linker 1 chain (Tylorrhynchus heterochetus (Japanese palolo worm)).